Consider the following 261-residue polypeptide: tRNA pseudouridine synthase A (261 aa).

Asp51 functions as the Nucleophile in the catalytic mechanism. Position 109 (Tyr109) interacts with substrate.

It belongs to the tRNA pseudouridine synthase TruA family. Homodimer.

It catalyses the reaction uridine(38/39/40) in tRNA = pseudouridine(38/39/40) in tRNA. Formation of pseudouridine at positions 38, 39 and 40 in the anticodon stem and loop of transfer RNAs. This chain is tRNA pseudouridine synthase A, found in Photobacterium profundum (strain SS9).